The primary structure comprises 330 residues: GTPase Obg (330 aa).

Residues 1–159 (MHFIDEVKIY…MWIHLSLKLL (159 aa)) enclose the Obg domain. In terms of domain architecture, OBG-type G spans 160–327 (SDVGLVGLPN…IVKLALETIK (168 aa)). GTP is bound by residues 166–173 (GLPNAGKS), 191–195 (FTTLV), 212–215 (DIPG), 279–282 (NKCD), and 308–310 (STC). Mg(2+) contacts are provided by serine 173 and threonine 193.

Belongs to the TRAFAC class OBG-HflX-like GTPase superfamily. OBG GTPase family. Monomer. Requires Mg(2+) as cofactor.

The protein resides in the cytoplasm. An essential GTPase which binds GTP, GDP and possibly (p)ppGpp with moderate affinity, with high nucleotide exchange rates and a fairly low GTP hydrolysis rate. Plays a role in control of the cell cycle, stress response, ribosome biogenesis and in those bacteria that undergo differentiation, in morphogenesis control. In Rickettsia conorii (strain ATCC VR-613 / Malish 7), this protein is GTPase Obg.